Consider the following 727-residue polypeptide: 1,4-alpha-glucan branching enzyme GlgB (727 aa).

Asp411 acts as the Nucleophile in catalysis. Catalysis depends on Glu464, which acts as the Proton donor.

Belongs to the glycosyl hydrolase 13 family. GlgB subfamily. In terms of assembly, monomer.

It catalyses the reaction Transfers a segment of a (1-&gt;4)-alpha-D-glucan chain to a primary hydroxy group in a similar glucan chain.. It participates in glycan biosynthesis; glycogen biosynthesis. Functionally, catalyzes the formation of the alpha-1,6-glucosidic linkages in glycogen by scission of a 1,4-alpha-linked oligosaccharide from growing alpha-1,4-glucan chains and the subsequent attachment of the oligosaccharide to the alpha-1,6 position. This chain is 1,4-alpha-glucan branching enzyme GlgB, found in Protochlamydia amoebophila (strain UWE25).